A 94-amino-acid polypeptide reads, in one-letter code: Putative septation protein SpoVG (94 aa).

This sequence belongs to the SpoVG family.

Could be involved in septation. The protein is Putative septation protein SpoVG of Acetivibrio thermocellus (strain ATCC 27405 / DSM 1237 / JCM 9322 / NBRC 103400 / NCIMB 10682 / NRRL B-4536 / VPI 7372) (Clostridium thermocellum).